The chain runs to 291 residues: 3-hydroxy-5-phosphonooxypentane-2,4-dione thiolase (291 aa).

Lys203 serves as the catalytic Schiff-base intermediate with substrate.

Belongs to the DeoC/FbaB aldolase family. Homodecamer.

Its subcellular location is the cytoplasm. The catalysed reaction is dihydroxyacetone phosphate + acetyl-CoA = 3-hydroxy-2,4-dioxopentyl phosphate + CoA. In terms of biological role, involved in the degradation of phospho-AI-2, thereby terminating induction of the lsr operon and closing the AI-2 signaling cycle. Catalyzes the transfer of an acetyl moiety from 3-hydroxy-5-phosphonooxypentane-2,4-dione to CoA to form glycerone phosphate and acetyl-CoA. The polypeptide is 3-hydroxy-5-phosphonooxypentane-2,4-dione thiolase (Escherichia coli O139:H28 (strain E24377A / ETEC)).